A 415-amino-acid chain; its full sequence is MSEVIEKAKKAKVAKEELVHQPTERKNEALSFIAEAIRFKQDEILAENEKDIVRGKEKGFSPALLDRLALTPERLNDIADAVMLLTKLEDPVGETLETIRKDNGLFIENVRVPLGVVGMIYEARPNVTVDAATLCLKTGNAVILRGSSSAINSNKALVRVIREALERSALPEDAVQLIEDTSKETAKQLFTLNDGLDVLIPRGGKNLIDMVVRESTVPVLETGAGNCHIFIDESAQPDMAEQVVINAKTQRPSVCNAIETVLIHKGWAEEHTKALLQKLEEAGVEIRGDEAVCTMLPSAVPARETDWGTEFLAPVVSIKTVAGIDEAIRHIRQYGTRHSEAILTENQENARYFLTSVDAAAVYHNASTRFTDGFEFGYGAEIGISTQKLHARGPMGLKALTSSKYIIKGNGQIRI.

It belongs to the gamma-glutamyl phosphate reductase family.

The protein resides in the cytoplasm. It catalyses the reaction L-glutamate 5-semialdehyde + phosphate + NADP(+) = L-glutamyl 5-phosphate + NADPH + H(+). Its pathway is amino-acid biosynthesis; L-proline biosynthesis; L-glutamate 5-semialdehyde from L-glutamate: step 2/2. In terms of biological role, catalyzes the NADPH-dependent reduction of L-glutamate 5-phosphate into L-glutamate 5-semialdehyde and phosphate. The product spontaneously undergoes cyclization to form 1-pyrroline-5-carboxylate. The protein is Gamma-glutamyl phosphate reductase 1 of Bacillus licheniformis (strain ATCC 14580 / DSM 13 / JCM 2505 / CCUG 7422 / NBRC 12200 / NCIMB 9375 / NCTC 10341 / NRRL NRS-1264 / Gibson 46).